The following is a 302-amino-acid chain: Arginase (302 aa).

4 residues coordinate Mn(2+): His-103, Asp-126, His-128, and Asp-130. Residues 128–132 (HGDLN), 139–141 (SGN), and Asp-180 each bind substrate. Residues Asp-229 and Asp-231 each contribute to the Mn(2+) site. Thr-243 and Glu-274 together coordinate substrate.

Belongs to the arginase family. Requires Mn(2+) as cofactor.

It catalyses the reaction L-arginine + H2O = urea + L-ornithine. It participates in nitrogen metabolism; urea cycle; L-ornithine and urea from L-arginine: step 1/1. This is Arginase (arg) from Staphylococcus aureus (strain MSSA476).